Reading from the N-terminus, the 93-residue chain is YcgL domain-containing protein VV1058 (93 aa).

The YcgL domain maps to 1-84 (MLCSIYKSSK…PPENLLQQHK (84 aa)). Residues 74 to 93 (PPPENLLQQHKERKAQQKND) are disordered.

In Vibrio vulnificus (strain YJ016), this protein is YcgL domain-containing protein VV1058.